We begin with the raw amino-acid sequence, 780 residues long: Striatin (780 aa).

The stretch at 53–120 (LHFLQHEWAR…QERAKYHKLK (68 aa)) forms a coiled coil. A caveolin-binding region spans residues 55–63 (FLQHEWARF). The interval 123–150 (TELNQGDMKPPSYDSDEGNETEVQPQQN) is disordered. Serine 137 bears the Phosphoserine mark. A calmodulin-binding region spans residues 149–166 (QNSQLMWKQGRQLLRQYL). The residue at position 225 (threonine 225) is a Phosphothreonine. 4 positions are modified to phosphoserine: serine 227, serine 229, serine 245, and serine 259. 3 disordered regions span residues 289–312 (DFLV…DWEK), 334–353 (EQYK…NRSK), and 364–392 (VDEL…ELSR). Residues 299-312 (NESRSAGDGTDWEK) show a composition bias toward basic and acidic residues. The span at 338–351 (KERKGKKGVKRPNR) shows a compositional bias: basic residues. WD repeat units follow at residues 461 to 500 (SHFD…PAKK), 514 to 553 (AHKG…VDPY), 567 to 606 (GHTD…PALS), 662 to 701 (SSSC…LIHS), 704 to 743 (AHLE…CIQE), and 750 to 780 (KFEE…KVFV).

Belongs to the WD repeat striatin family. In terms of assembly, part of the core of STRIPAK complexes composed of PP2A catalytic and scaffolding subunits, the striatins (PP2A regulatory subunits), the striatin-associated proteins MOB4, STRIP1 and STRIP2, PDCD10 and members of the STE20 kinases, such as STK24 and STK26. Interacts with CTTNBP2; this interaction may regulate dendritic spine distribution of STRN. Activation of glutamate receptors weakens the interaction with CTTNBP2. As to expression, mainly expressed in brain but is also expressed at low levels in various tissues such as kidney, spleen, skeletal muscle and lung.

It localises to the cytoplasm. Its subcellular location is the membrane. The protein localises to the cell projection. It is found in the dendritic spine. Calmodulin-binding scaffolding protein which is the center of the striatin-interacting phosphatase and kinase (STRIPAK) complexes. STRIPAK complexes have critical roles in protein (de)phosphorylation and are regulators of multiple signaling pathways including Hippo, MAPK, nuclear receptor and cytoskeleton remodeling. Different types of STRIPAK complexes are involved in a variety of biological processes such as cell growth, differentiation, apoptosis, metabolism and immune regulation. This chain is Striatin (Strn), found in Mus musculus (Mouse).